Reading from the N-terminus, the 180-residue chain is Large ribosomal subunit protein uL5 (180 aa).

The protein belongs to the universal ribosomal protein uL5 family. As to quaternary structure, part of the 50S ribosomal subunit; part of the 5S rRNA/L5/L18/L25 subcomplex. Contacts the 5S rRNA and the P site tRNA. Forms a bridge to the 30S subunit in the 70S ribosome.

Functionally, this is one of the proteins that bind and probably mediate the attachment of the 5S RNA into the large ribosomal subunit, where it forms part of the central protuberance. In the 70S ribosome it contacts protein S13 of the 30S subunit (bridge B1b), connecting the 2 subunits; this bridge is implicated in subunit movement. Contacts the P site tRNA; the 5S rRNA and some of its associated proteins might help stabilize positioning of ribosome-bound tRNAs. The chain is Large ribosomal subunit protein uL5 from Streptococcus pyogenes serotype M1.